We begin with the raw amino-acid sequence, 258 residues long: MYYSSPTCFVLITIFAVVVTQLIFMRTVSSLNMTNAYLNHKCLANQGKYKPGSWYEKKLQSIIVSIGSGDGFTLGYDMMALGKDSDYVAVTNQCRGDSNGSMCRSCFATAIARVTRCPRYKGAIIWYDQCTLQISPFDTQGKFDKDNDFCMSNKKKMNVDSFGEKWMTFLDNLVGIALKDHLYAAGDTRFGTKKLYGMVQCRLDIYNNSCRECVGHIAVKFQDCWHGKQGARVLGSGCNFRYELYPFVGSNKRGRNLN.

An N-terminal signal peptide occupies residues 1–30; sequence MYYSSPTCFVLITIFAVVVTQLIFMRTVSS. 2 consecutive Gnk2-homologous domains span residues 37–139 and 144–247; these read YLNH…PFDT and DKDN…LYPF.

This sequence belongs to the cysteine-rich repeat secretory protein family.

It is found in the secreted. In Arabidopsis thaliana (Mouse-ear cress), this protein is Putative cysteine-rich repeat secretory protein 16 (CRRSP16).